Consider the following 151-residue polypeptide: UPF0208 membrane protein SG1605 (151 aa).

Helical transmembrane passes span F46–A64 and G70–L90.

The protein belongs to the UPF0208 family.

It localises to the cell inner membrane. This Sodalis glossinidius (strain morsitans) protein is UPF0208 membrane protein SG1605.